Consider the following 829-residue polypeptide: Periplasmic nitrate reductase (829 aa).

Residues 1–30 (MKLSRRDFMKANAVAAAAAVAGVSAPTLAA) constitute a signal peptide (tat-type signal). The 57-residue stretch at 41 to 97 (ITWDKAPCRFCGTGCSVLVGSQDGRVVATQGDPDAPVNRGLNCIKGYFLSKIMYGQD) folds into the 4Fe-4S Mo/W bis-MGD-type domain. Residues Cys-48, Cys-51, Cys-55, and Cys-83 each contribute to the [4Fe-4S] cluster site. Mo-bis(molybdopterin guanine dinucleotide)-binding positions include Lys-85, Gln-152, Asn-177, Cys-181, 214–221 (WGSNMAEM), 245–249 (STFEH), 264–266 (QTD), Met-374, Gln-378, Asn-484, 510–511 (SD), Lys-533, Asp-560, and 719–728 (TGRVLEHWHT). Phe-795 contacts substrate. Mo-bis(molybdopterin guanine dinucleotide) is bound by residues Asn-803 and Lys-820.

The protein belongs to the prokaryotic molybdopterin-containing oxidoreductase family. NasA/NapA/NarB subfamily. In terms of assembly, component of the periplasmic nitrate reductase NapAB complex composed of NapA and NapB. [4Fe-4S] cluster is required as a cofactor. Mo-bis(molybdopterin guanine dinucleotide) serves as cofactor. Post-translationally, predicted to be exported by the Tat system. The position of the signal peptide cleavage has not been experimentally proven.

It localises to the periplasm. It carries out the reaction 2 Fe(II)-[cytochrome] + nitrate + 2 H(+) = 2 Fe(III)-[cytochrome] + nitrite + H2O. Its function is as follows. Catalytic subunit of the periplasmic nitrate reductase complex NapAB. Receives electrons from NapB and catalyzes the reduction of nitrate to nitrite. The sequence is that of Periplasmic nitrate reductase from Aeromonas hydrophila subsp. hydrophila (strain ATCC 7966 / DSM 30187 / BCRC 13018 / CCUG 14551 / JCM 1027 / KCTC 2358 / NCIMB 9240 / NCTC 8049).